Consider the following 424-residue polypeptide: GTPase Obg (424 aa).

In terms of domain architecture, Obg spans 1–159 (MVFIDTARIY…MWVRLELKLL (159 aa)). An OBG-type G domain is found at 160 to 330 (ADVGLVGFPN…LLDKTIEILS (171 aa)). GTP contacts are provided by residues 166–173 (GFPNAGKS), 191–195 (FTTLT), 212–215 (DIPG), 282–285 (NKMD), and 311–313 (SAL). Ser-173 and Thr-193 together coordinate Mg(2+). Positions 347 to 424 (NPPEEEETLE…VRDFEFEYYE (78 aa)) constitute an OCT domain.

Belongs to the TRAFAC class OBG-HflX-like GTPase superfamily. OBG GTPase family. In terms of assembly, monomer. It depends on Mg(2+) as a cofactor.

The protein resides in the cytoplasm. Its function is as follows. An essential GTPase which binds GTP, GDP and possibly (p)ppGpp with moderate affinity, with high nucleotide exchange rates and a fairly low GTP hydrolysis rate. Plays a role in control of the cell cycle, stress response, ribosome biogenesis and in those bacteria that undergo differentiation, in morphogenesis control. The sequence is that of GTPase Obg from Caldanaerobacter subterraneus subsp. tengcongensis (strain DSM 15242 / JCM 11007 / NBRC 100824 / MB4) (Thermoanaerobacter tengcongensis).